Here is a 102-residue protein sequence, read N- to C-terminus: MACEGAPEVRIGRKPVMNYVLAILTTLMEQGTNQVVVKARGRNINRAVDAVEIVRKRFAKNIEIKDIKIDSQEIEVQTPEGQTRTRRVSSIEICLEKAGESA.

Arg-10, Arg-13, Arg-40, Arg-42, Asn-43, Arg-46, and Arg-86 together coordinate DNA.

The protein belongs to the histone-like Alba family. As to quaternary structure, forms homodimers and homotetramers; oligomerization is enhanced and stabilized by DNA. Interacts with Alba 1.

It localises to the cytoplasm. The protein localises to the chromosome. Its function is as follows. Binds double-stranded DNA tightly but without sequence specificity. Involved in DNA compaction. This Aeropyrum pernix (strain ATCC 700893 / DSM 11879 / JCM 9820 / NBRC 100138 / K1) protein is DNA/RNA-binding protein Alba 2.